Reading from the N-terminus, the 125-residue chain is Large ribosomal subunit protein bL19 (125 aa).

It belongs to the bacterial ribosomal protein bL19 family.

This protein is located at the 30S-50S ribosomal subunit interface and may play a role in the structure and function of the aminoacyl-tRNA binding site. The sequence is that of Large ribosomal subunit protein bL19 from Ehrlichia ruminantium (strain Welgevonden).